Consider the following 118-residue polypeptide: DNA-binding protein inhibitor ID-3-A (118 aa).

Residues 32 to 84 enclose the bHLH domain; sequence SHKGPGMDEPMGLLYDMNGCYSKLKELVPGIPQGSKLSQVEILQHVIDYIFDL.

As to quaternary structure, homodimer. Heterodimer with other HLH proteins. Interacts (via HLH domain) with the bHLH protein hes4/hairy2 (via Orange domain). Interacts with stat3. As to expression, at gastrula stage, expressed in all three germ layers, but becomes localized to discrete domains of the developing nervous system during neurulation, including the anterior neural plate, cement gland, eye anlagen, otic placode and both cranial and trunk premigratory and early migratory neural crest cells. Also expressed in the most dorsal and ventral portions of the myotome, the developing heart and anterior blood islets, and in the tail fin mesenchyme. Expressed at a low level in limbs, with expression decreasing as limbs develop, but expressed at a high level in blastemas (regenerated limbs), where expression is localized to both the blastermal epidermis and mesenchyme. Widely expressed in adults including the liver and heart.

Its subcellular location is the nucleus. In terms of biological role, transcriptional regulator (lacking a basic DNA binding domain) which negatively regulates the basic helix-loop-helix (bHLH) transcription factors by forming heterodimers and inhibiting their DNA binding and transcriptional activity. Influences cell fate decisions in the embryo by sequestering and blocking the activity of the bHLH transcription factors that control these decisions. Inhibits the binding of myogenic bHLH-containing complexes to E-box DNA, thereby preventing activation of muscle-specific target genes. Also inhibits the activity of neurogenic factor neurod1/neuroD. Plays a role in cell cycle progression and survival of neural crest progenitors; binding to either hes4-B/hairy2b or stat3 blocks the formation of transcription factor complexes and the repressor function of hes4-B/hairy2B, to allow neural crest progenitors to differentiate. May play a role in the regulation of the circadian rhythm. The chain is DNA-binding protein inhibitor ID-3-A (id3-a) from Xenopus laevis (African clawed frog).